The primary structure comprises 132 residues: Small ribosomal subunit protein uS8c (132 aa).

Belongs to the universal ribosomal protein uS8 family. In terms of assembly, part of the 30S ribosomal subunit.

It localises to the plastid. Its subcellular location is the chloroplast. Functionally, one of the primary rRNA binding proteins, it binds directly to 16S rRNA central domain where it helps coordinate assembly of the platform of the 30S subunit. The polypeptide is Small ribosomal subunit protein uS8c (rps8) (Ceratophyllum demersum (Rigid hornwort)).